Consider the following 275-residue polypeptide: NH(3)-dependent NAD(+) synthetase (275 aa).

An ATP-binding site is contributed by 50–57 (GISGGVDS). Mg(2+) is bound at residue D56. R147 is a deamido-NAD(+) binding site. Residue T167 participates in ATP binding. E172 contributes to the Mg(2+) binding site. Deamido-NAD(+)-binding residues include K180 and D187. ATP is bound by residues K196 and T218. A deamido-NAD(+)-binding site is contributed by 267–268 (HK).

This sequence belongs to the NAD synthetase family. In terms of assembly, homodimer.

The catalysed reaction is deamido-NAD(+) + NH4(+) + ATP = AMP + diphosphate + NAD(+) + H(+). Its pathway is cofactor biosynthesis; NAD(+) biosynthesis; NAD(+) from deamido-NAD(+) (ammonia route): step 1/1. Its function is as follows. Catalyzes the ATP-dependent amidation of deamido-NAD to form NAD. Uses ammonia as a nitrogen source. The sequence is that of NH(3)-dependent NAD(+) synthetase from Stutzerimonas stutzeri (strain A1501) (Pseudomonas stutzeri).